Consider the following 267-residue polypeptide: Phosphate import ATP-binding protein PstB (267 aa).

The 242-residue stretch at 21 to 262 folds into the ABC transporter domain; it reads VAARNLDFYY…PSKQQTEDYI (242 aa). 53-60 lines the ATP pocket; it reads GPSGCGKS.

Belongs to the ABC transporter superfamily. Phosphate importer (TC 3.A.1.7) family. In terms of assembly, the complex is composed of two ATP-binding proteins (PstB), two transmembrane proteins (PstC and PstA) and a solute-binding protein (PstS).

The protein localises to the cell inner membrane. The enzyme catalyses phosphate(out) + ATP + H2O = ADP + 2 phosphate(in) + H(+). Functionally, part of the ABC transporter complex PstSACB involved in phosphate import. Responsible for energy coupling to the transport system. This is Phosphate import ATP-binding protein PstB from Xanthomonas axonopodis pv. citri (strain 306).